Reading from the N-terminus, the 150-residue chain is Ribonuclease pancreatic delta-type (150 aa).

The first 25 residues, 1-25 (MGLEKSFILFSLLVLVLGWVQPSLG), serve as a signal peptide directing secretion. Position 35 (R35) interacts with substrate. The active-site Proton acceptor is H37. Cystine bridges form between C51–C110, C65–C121, C83–C136, and C90–C98. Residues 66 to 70 (KPVNT) and K91 each bind substrate. H145 functions as the Proton donor in the catalytic mechanism.

It belongs to the pancreatic ribonuclease family. Monomer.

Its subcellular location is the secreted. It carries out the reaction an [RNA] containing cytidine + H2O = an [RNA]-3'-cytidine-3'-phosphate + a 5'-hydroxy-ribonucleotide-3'-[RNA].. The catalysed reaction is an [RNA] containing uridine + H2O = an [RNA]-3'-uridine-3'-phosphate + a 5'-hydroxy-ribonucleotide-3'-[RNA].. Endonuclease that catalyzes the cleavage of RNA on the 3' side of pyrimidine nucleotides. Acts on single-stranded and double-stranded RNA. The protein is Ribonuclease pancreatic delta-type of Rattus tiomanicus (Malayan field rat).